A 1113-amino-acid chain; its full sequence is Antigenic protein P1 (1113 aa).

The chain crosses the membrane as a helical span at residues 7-27; that stretch reads IIAVVAIASAIVTGVVVIVVV. Residues N121, N207, N225, N233, N274, N533, N576, N622, N675, N679, N730, N753, N880, N899, N907, N972, and N995 are each glycosylated (N-linked (GlcNAc...) asparagine). One can recognise a Peptidase M60 domain in the interval 159 to 473; that stretch reads VFGQRAVAWA…SYVNMAHAFG (315 aa). The region spanning 648 to 800 is the PA14 domain; that stretch reads LDPHQVEYEV…TEESSVDVSK (153 aa).

Its subcellular location is the membrane. The polypeptide is Antigenic protein P1 (Entamoeba histolytica (strain ATCC 30459 / HM-1:IMSS / ABRM)).